A 576-amino-acid chain; its full sequence is Peptidoglycan D,D-transpeptidase FtsI (576 aa).

A helical membrane pass occupies residues 22–42; the sequence is ITILLSLIIITIILVLSRITF. Catalysis depends on serine 308, which acts as the Acyl-ester intermediate.

Belongs to the transpeptidase family. FtsI subfamily.

The protein localises to the cell inner membrane. The catalysed reaction is Preferential cleavage: (Ac)2-L-Lys-D-Ala-|-D-Ala. Also transpeptidation of peptidyl-alanyl moieties that are N-acyl substituents of D-alanine.. It participates in cell wall biogenesis; peptidoglycan biosynthesis. In terms of biological role, catalyzes cross-linking of the peptidoglycan cell wall at the division septum. The chain is Peptidoglycan D,D-transpeptidase FtsI from Buchnera aphidicola subsp. Baizongia pistaciae (strain Bp).